A 27-amino-acid chain; its full sequence is GLFLDTLKGLAGKLLQGLKCIKAGCKP.

A disulfide bridge connects residues Cys-20 and Cys-25.

Expressed by the skin glands.

The protein resides in the secreted. Functionally, antibacterial activity against Gram-positive bacterium S.aureus (MIC=40 uM) and Gram-negative bacterium E.coli (MIC=2 uM). Has activity against C.albicans (MIC=46 uM). This is Ranatuerin-2Cb from Lithobates clamitans (Green frog).